The chain runs to 87 residues: Small ribosomal subunit protein bS20 (87 aa).

The tract at residues 1–22 (MANSAQARKRARQSVKQRAHNA) is disordered. The span at 7–19 (ARKRARQSVKQRA) shows a compositional bias: basic residues.

Belongs to the bacterial ribosomal protein bS20 family.

Functionally, binds directly to 16S ribosomal RNA. This is Small ribosomal subunit protein bS20 from Neisseria gonorrhoeae (strain ATCC 700825 / FA 1090).